The following is a 267-amino-acid chain: LysM and putative peptidoglycan-binding domain-containing protein 4 (267 aa).

Topologically, residues methionine 1 to glutamine 211 are extracellular. The segment at histidine 30–valine 64 is disordered. The segment covering proline 35–asparagine 45 has biased composition (acidic residues). Residues leucine 49–valine 64 are compositionally biased toward basic and acidic residues. Positions leucine 70–isoleucine 114 constitute a LysM domain. An N-linked (GlcNAc...) asparagine glycan is attached at asparagine 79. Residues arginine 130 to glycine 152 form a disordered region. Polar residues predominate over residues proline 142–glycine 152. Residues tryptophan 212–valine 232 form a helical membrane-spanning segment. The Cytoplasmic segment spans residues tyrosine 233 to proline 267.

It localises to the membrane. The polypeptide is LysM and putative peptidoglycan-binding domain-containing protein 4 (lysmd4) (Danio rerio (Zebrafish)).